A 340-amino-acid polypeptide reads, in one-letter code: Coproporphyrin III ferrochelatase (340 aa).

Residues serine 52 and tyrosine 116 each contribute to the Fe-coproporphyrin III site. 2 residues coordinate Fe(2+): histidine 172 and glutamate 255.

This sequence belongs to the ferrochelatase family.

The protein localises to the cytoplasm. It carries out the reaction Fe-coproporphyrin III + 2 H(+) = coproporphyrin III + Fe(2+). It functions in the pathway porphyrin-containing compound metabolism; protoheme biosynthesis. Involved in coproporphyrin-dependent heme b biosynthesis. Catalyzes the insertion of ferrous iron into coproporphyrin III to form Fe-coproporphyrin III. The protein is Coproporphyrin III ferrochelatase of Mycobacterium ulcerans (strain Agy99).